The chain runs to 368 residues: 2-oxoglutarate-dependent dioxygenase frbJ (368 aa).

Residues 171 to 277 (QQHKLKIVKY…RYSIPFFQGV (107 aa)) enclose the Fe2OG dioxygenase domain. Residues H198, D200, and H256 each contribute to the Fe cation site. R268 is a binding site for 2-oxoglutarate.

This sequence belongs to the iron/ascorbate-dependent oxidoreductase family.

It participates in antifungal biosynthesis. In terms of biological role, 2-oxoglutarate-dependent dioxygenase; part of the gene cluster that mediates the biosynthesis of the antifungal antibiotic FR901469, an inhibitor of beta-1,3-glucansynthase, exerting antifungal activity against the pathogenes Candida albicans and Aspergillus fumigatus. FR901469 is a cyclic depsipeptide containing 12 amino acid residues and a fatty acid chain. The NRPS frbI contains 12 modules responsible for the formation of the depsipeptide backbone which is denoted as Acyl-Thr-Ala-Tyr-Val-4OHPro-Thr-Thr-3OHPro-threo3OHGln-Gly-Thr-Orn-OH (C71H116N14O23). The PKS frbB is probably involved in the production of the hydrocarbon chain, and the acyl-CoA ligase frbC might be involved in the transport of the chain to the peptide ptoduct of frbI. Because FR901469 contains 3 hydroxylated amino acid residues, the 3 oxygenases frbA, frbH, and frbJ might be participating in amino acid hydroxylation. As no thioesterase domains were detected in frbI or frbB, the thioesterases frbD and frbE may instead release and cyclize the products of the NRPS and PKS, respectively. The protein is 2-oxoglutarate-dependent dioxygenase frbJ of Dothideomycetidae sp. (strain 11243) (Fungal sp. (strain No.11243)).